Reading from the N-terminus, the 256-residue chain is Diaminopimelate epimerase (256 aa).

Substrate is bound by residues asparagine 11 and asparagine 63. Residue cysteine 72 is the Proton donor of the active site. Residues 73-74 (GN), asparagine 169, and 187-188 (ER) contribute to the substrate site. The Proton acceptor role is filled by cysteine 197. Substrate is bound at residue 198–199 (GT).

The protein belongs to the diaminopimelate epimerase family. Homodimer.

It localises to the cytoplasm. The catalysed reaction is (2S,6S)-2,6-diaminopimelate = meso-2,6-diaminopimelate. The protein operates within amino-acid biosynthesis; L-lysine biosynthesis via DAP pathway; DL-2,6-diaminopimelate from LL-2,6-diaminopimelate: step 1/1. Functionally, catalyzes the stereoinversion of LL-2,6-diaminopimelate (L,L-DAP) to meso-diaminopimelate (meso-DAP), a precursor of L-lysine and an essential component of the bacterial peptidoglycan. The polypeptide is Diaminopimelate epimerase (Flavobacterium psychrophilum (strain ATCC 49511 / DSM 21280 / CIP 103535 / JIP02/86)).